The primary structure comprises 30 residues: Kappa-sparatoxin-Hv1b (30 aa).

Disulfide bonds link Cys-3–Cys-17, Cys-10–Cys-22, and Cys-16–Cys-26. At Trp-30 the chain carries Tryptophan amide.

Belongs to the neurotoxin 10 (Hwtx-1) family. 19 (HpTX2) subfamily. In terms of tissue distribution, expressed by the venom gland.

Its subcellular location is the secreted. Its function is as follows. Inhibitor of voltage-gated potassium channels of the Kv4/KCND family. Inhibition of Kv4.3/KCND3 and Kv4.2/KCND2 is strongly voltage-dependent, while inhibition of Kv4.1/KCND1 shows less voltage-dependence. Its binding site may be near the potassium channel voltage sensor. Also blocks calcium channels. The chain is Kappa-sparatoxin-Hv1b from Heteropoda venatoria (Brown huntsman spider).